Reading from the N-terminus, the 66-residue chain is Large ribosomal subunit protein bL35 (66 aa).

Positions 1–16 are enriched in basic residues; it reads MPKQKTHRASAKRFKR. The disordered stretch occupies residues 1–21; sequence MPKQKTHRASAKRFKRTGNGG.

This sequence belongs to the bacterial ribosomal protein bL35 family.

The polypeptide is Large ribosomal subunit protein bL35 (Lactococcus lactis subsp. cremoris (strain MG1363)).